Consider the following 201-residue polypeptide: Large ribosomal subunit protein eL15 (201 aa).

This sequence belongs to the eukaryotic ribosomal protein eL15 family.

This chain is Large ribosomal subunit protein eL15 (RPL15), found in Quercus suber (Cork oak).